The primary structure comprises 348 residues: Photosystem II protein D1 (348 aa).

3 consecutive transmembrane segments (helical) span residues 33-50, 122-137, and 146-160; these read YIGWFGILMFPLISLATV, HFIFGAGAWMGREWEF, and WIFVAFSAPLVASCA. H122 serves as a coordination point for chlorophyll a. W130 contacts pheophytin a. The [CaMn4O5] cluster site is built by D174 and E193. The chain crosses the membrane as a helical span at residues 201 to 222; that stretch reads FHILGVAGVFGGSLFSAMHGSL. Chlorophyll a is bound at residue H202. A quinone is bound by residues H219 and 268-269; that span reads SF. Position 219 (H219) interacts with Fe cation. Residue H276 participates in Fe cation binding. A helical membrane pass occupies residues 278–292; it reads FLAAWPVIGIWFTAL. Residues H336, E337, D346, and A348 each coordinate [CaMn4O5] cluster.

The protein belongs to the reaction center PufL/M/PsbA/D family. As to quaternary structure, PSII is composed of 1 copy each of membrane proteins PsbA, PsbB, PsbC, PsbD, PsbE, PsbF, PsbH, PsbI, PsbJ, PsbK, PsbL, PsbM, PsbT, PsbX, PsbY, PsbZ, Psb30/Ycf12, at least 3 peripheral proteins of the oxygen-evolving complex and a large number of cofactors. It forms dimeric complexes. The D1/D2 heterodimer binds P680, chlorophylls that are the primary electron donor of PSII, and subsequent electron acceptors. It shares a non-heme iron and each subunit binds pheophytin, quinone, additional chlorophylls, carotenoids and lipids. D1 provides most of the ligands for the Mn4-Ca-O5 cluster of the oxygen-evolving complex (OEC). There is also a Cl(-1) ion associated with D1 and D2, which is required for oxygen evolution. The PSII complex binds additional chlorophylls, carotenoids and specific lipids. is required as a cofactor. In terms of processing, tyr-165 forms a radical intermediate that is referred to as redox-active TyrZ, YZ or Y-Z.

It is found in the plastid. Its subcellular location is the chloroplast thylakoid membrane. The catalysed reaction is 2 a plastoquinone + 4 hnu + 2 H2O = 2 a plastoquinol + O2. Photosystem II (PSII) is a light-driven water:plastoquinone oxidoreductase that uses light energy to abstract electrons from H(2)O, generating O(2) and a proton gradient subsequently used for ATP formation. It consists of a core antenna complex that captures photons, and an electron transfer chain that converts photonic excitation into a charge separation. The D1/D2 (PsbA/PsbD) reaction center heterodimer binds P680, the primary electron donor of PSII as well as several subsequent electron acceptors. The sequence is that of Photosystem II protein D1 from Heterocapsa rotundata (Dinoflagellate).